The primary structure comprises 483 residues: 6-phosphogluconate dehydrogenase, decarboxylating 1 (483 aa).

NADP(+) is bound by residues 11–16 (GLAVMG), 34–36 (NRT), 78–80 (VKA), and Asn106. Substrate-binding positions include Asn106 and 132-134 (SGG). The active-site Proton acceptor is Lys186. 189–190 (HN) lines the substrate pocket. Glu193 acts as the Proton donor in catalysis. Substrate contacts are provided by Tyr194, Lys264, Arg291, Arg454, and His460.

The protein belongs to the 6-phosphogluconate dehydrogenase family. Homodimer.

The protein resides in the cytoplasm. It carries out the reaction 6-phospho-D-gluconate + NADP(+) = D-ribulose 5-phosphate + CO2 + NADPH. Its pathway is carbohydrate degradation; pentose phosphate pathway; D-ribulose 5-phosphate from D-glucose 6-phosphate (oxidative stage): step 3/3. Functionally, catalyzes the oxidative decarboxylation of 6-phosphogluconate to ribulose 5-phosphate and CO(2), with concomitant reduction of NADP to NADPH. This is 6-phosphogluconate dehydrogenase, decarboxylating 1 (pgdC) from Spinacia oleracea (Spinach).